A 391-amino-acid polypeptide reads, in one-letter code: 4-coumarate--CoA ligase (391 aa).

The protein belongs to the ATP-dependent AMP-binding enzyme family.

The enzyme catalyses (E)-4-coumarate + ATP + CoA = (E)-4-coumaroyl-CoA + AMP + diphosphate. Functionally, converts p-coumaric acid into p-coumaryl CoA. This is necessary for the activation of the photoactive yellow protein (PYP) chromophore. This is 4-coumarate--CoA ligase (pcl) from Halorhodospira halophila (Ectothiorhodospira halophila).